Reading from the N-terminus, the 2515-residue chain is Protein tudor (2515 aa).

3 positions are modified to phosphoserine: S226, S235, and S239. Tudor domains lie at 455 to 513 (APEL…LLEI) and 641 to 696 (QLIL…HLEM). S800 is modified (phosphoserine). Residues 840–996 (QAVKSVSGSK…SSSESVAAAK (157 aa)) form a disordered region. A compositionally biased stretch (low complexity) spans 890–900 (STGSYSSGMSS). Polar residues predominate over residues 906 to 917 (RQQNGRTPIQSP). Positions 918–927 (RHNEKQEAKK) are enriched in basic and acidic residues. Composition is skewed to polar residues over residues 943 to 954 (GQQGNQRSQNAP) and 964 to 976 (QKST…SSKR). Over residues 977–995 (SSGVGSDIASSSSESVAAA) the composition is skewed to low complexity. 2 consecutive Tudor domains span residues 1062-1122 (QLKV…FADP) and 1355-1414 (KFDV…FYEH). Residues 1515-1589 (EEDKGRKETV…KPATPVPEVV (75 aa)) form a disordered region. Basic and acidic residues predominate over residues 1540 to 1553 (NDKDREPKKSKPAE). Residues 1569–1584 (SPVPAEPAPVPKPATP) are compositionally biased toward pro residues. 5 consecutive Tudor domains span residues 1662-1718 (NVVN…SHIE), 1839-1898 (GFEK…SLPS), 2023-2082 (KAAV…LIKP), 2211-2269 (TTNS…PIPS), and 2392-2451 (DLKE…KPAR).

May form part of a piRNA processing complex consisting of tud, aub and AGO3. Interacts with AGO3 (when symmetrically dimethylated on Arg residues) and aub (when symmetrically dimethylated on Arg residues). Interacts with vls. Interacts with me31B/DDX6 (when symmetrically dimethylated on Arg residues).

The protein resides in the cytoplasm. It is found in the perinuclear region. The protein localises to the cytoplasmic ribonucleoprotein granule. Its function is as follows. May act via the Piwi-interacting RNA (piRNA) metabolic process mediated by aub and AGO3 Piwi proteins, which mediates the repression of transposable elements during meiosis by forming complexes composed of piRNAs and Piwi proteins and governs the methylation and subsequent repression of transposons. Required during oogenesis for the formation of primordial germ cells and for normal abdominal segmentation. Not involved in repression of retroelements. The polypeptide is Protein tudor (Drosophila melanogaster (Fruit fly)).